The primary structure comprises 276 residues: Small ribosomal subunit protein uS3 (276 aa).

One can recognise a KH type-2 domain in the interval 17–86; that stretch reads VDEYLAKELD…NPQIDVQDVG (70 aa). Positions 193-276 are disordered; it reads FQINAPPKEP…AETHGDIQDR (84 aa). Residues 214 to 227 are compositionally biased toward low complexity; it reads EAEPSQAAETQEQQ. Basic and acidic residues-rich tracts occupy residues 228 to 240 and 258 to 276; these read AGEK…RLLD and PESR…IQDR.

Belongs to the universal ribosomal protein uS3 family. In terms of assembly, part of the 30S ribosomal subunit.

In terms of biological role, binds the lower part of the 30S subunit head. The protein is Small ribosomal subunit protein uS3 of Methanothrix thermoacetophila (strain DSM 6194 / JCM 14653 / NBRC 101360 / PT) (Methanosaeta thermophila).